The following is a 130-amino-acid chain: Small ribosomal subunit protein uS11 (130 aa).

It belongs to the universal ribosomal protein uS11 family. In terms of assembly, part of the 30S ribosomal subunit. Interacts with proteins S7 and S18. Binds to IF-3.

Functionally, located on the platform of the 30S subunit, it bridges several disparate RNA helices of the 16S rRNA. Forms part of the Shine-Dalgarno cleft in the 70S ribosome. The chain is Small ribosomal subunit protein uS11 from Alteromonas mediterranea (strain DSM 17117 / CIP 110805 / LMG 28347 / Deep ecotype).